The sequence spans 146 residues: Snaclec coagulation factor IX/factor X-binding protein subunit B (146 aa).

Positions 1 to 23 (MGRFIFLSFGLLVVFLSLSGTGA) are cleaved as a signal peptide. Cystine bridges form between Cys-25–Cys-36, Cys-53–Cys-142, and Cys-119–Cys-134. A C-type lectin domain is found at 32 to 143 (YEGHCYKPFN…CRMEAYFVCE (112 aa)). Residues Ser-64 and Glu-70 each coordinate Ca(2+). Glu-143 provides a ligand contact to Ca(2+).

This sequence belongs to the snaclec family. In terms of assembly, heterodimer with subunit A of IX/X-bp or IX-bp; disulfide-linked. As to expression, expressed by the venom gland.

The protein resides in the secreted. When linked to subunit A of IX/X-bp, anticoagulant protein which binds to the gamma-carboxyglutamic acid-domain regions of factors IX (F9) and factor X (F10) in the presence of calcium with a 1 to 1 stoichiometry. Its function is as follows. When linked to subunit A of IX-bp, anticoagulant protein which binds to the gamma-carboxyglutamic acid-domain regions of factor IX (but not to factor X) in the presence of calcium with a 1 to 1 stoichiometry. The sequence is that of Snaclec coagulation factor IX/factor X-binding protein subunit B from Gloydius halys (Chinese water mocassin).